Reading from the N-terminus, the 258-residue chain is Maintenance of carboxysome distribution protein A (258 aa).

Residues Gly11, Gly12, Gln13, Gly14, Lys15, Thr16, Thr17, Gln40, Glu147, Lys151, Phe182, Arg183, Leu216, Glu217, Ser218, and Tyr221 each coordinate ATP. Thr16 is a Mg(2+) binding site.

This sequence belongs to the ParA family. McdA subfamily. Homodimerizes in the presence of ATP, making extra nucleotide contacts than with ADP or AMP-PNP. Each subunit binds 1 ATP molecule; Glu-147, Lys-151 and Arg-183 cross the dimer interface to contact ATP in the other subunit, while Phe-182, Arg-183 and Tyr-221 stack with the adenine base in their own subunit. Forms a complex with McdB.

It is found in the cytoplasm. The protein localises to the nucleoid. The enzyme catalyses ATP + H2O = ADP + phosphate + H(+). Its function is as follows. McdA and McdB together mediate carboxysome (Cb) spacing, size, ultrastructure and probably inheritance in the cell, together they prevent Cb aggregation. McdA is an ATPase that forms dynamic gradients on the nucleoid in response to adapter protein McdB, which associates with carboxysomes. The interplay between McdA gradients on the nucleoid and McdB-bound carboxysomes result in the equal spacing of Cbs along the cell length. Binds DNA saturably and strongly in the presence of Mg(2+)ATP; without ATP, DNA-binding is very poor (tested with a mutant that should not be able to hydrolyze ATP, Asp-38-Ala). Decreasing the NaCl concentration increases DNA binding. Functionally, incorrect positioning (aggregation) of carboxysomes results in reduced CO(2) fixation by encapsulated ribulose-1,5-bisphosphate carboxylase (RuBisCO, cbbL/cbbS), which leads to slower growth. The sequence is that of Maintenance of carboxysome distribution protein A from Gloeothece citriformis (strain PCC 7424) (Cyanothece sp. (strain PCC 7424)).